We begin with the raw amino-acid sequence, 483 residues long: MSFRLRYAPSPTGFLHIGNTRTALMNYLFAKHYNGSFIVRIEDTDLARNVEGAIESQFENLNWLGIYPDESIFNPNDQKYGKYMQSQKFDRYKQLAEQLVDQNKAYRCFCTSEELEKDYEDQTSKGIIATKYSQKCLFLTQDQIQKNLENKKEYSIRFKVPKNKTWTINDIVRGDVSFDSKDLGDFVILKSNGVATYNFAVVVDDYDMQITHVLRGEEHISNTPRQMMIYDAFNWNYPMFGHLTLIVDNTGKKLSKRSGNALFFIEQYKKQGYLSQAIFNYIALLGWSPPGEQEILSQNELIKIFDEKRFSKSPSTFDMVKMKWINSVYMKKLDDDKYLEFVKSFINTNKFDITSKSETWLNHLLLLYKKELEYAEQINDHLDLFFNKNTLDNNTIDVLNNLTNYKNVVEIFKNQINVLKDWTIENIKQIIKDTSTLANVKGKDLFMPIRIFATKSEHGPSLADVIYLLGKTTVLNNINSLER.

A 'HIGH' region motif is present at residues 9–19; sequence PSPTGFLHIGN. A 'KMSKS' region motif is present at residues 253-257; sequence KLSKR. Residue lysine 256 coordinates ATP.

This sequence belongs to the class-I aminoacyl-tRNA synthetase family. Glutamate--tRNA ligase type 1 subfamily. In terms of assembly, monomer.

The protein localises to the cytoplasm. It catalyses the reaction tRNA(Glu) + L-glutamate + ATP = L-glutamyl-tRNA(Glu) + AMP + diphosphate. Catalyzes the attachment of glutamate to tRNA(Glu) in a two-step reaction: glutamate is first activated by ATP to form Glu-AMP and then transferred to the acceptor end of tRNA(Glu). The chain is Glutamate--tRNA ligase from Mycoplasma capricolum subsp. capricolum (strain California kid / ATCC 27343 / NCTC 10154).